Here is an 87-residue protein sequence, read N- to C-terminus: Translation initiation factor IF-1 2 (87 aa).

Positions methionine 1–lysine 72 constitute an S1-like domain. A disordered region spans residues asparagine 68–arginine 87. Residues proline 77–arginine 87 show a composition bias toward pro residues.

Belongs to the IF-1 family. In terms of assembly, component of the 30S ribosomal translation pre-initiation complex which assembles on the 30S ribosome in the order IF-2 and IF-3, IF-1 and N-formylmethionyl-tRNA(fMet); mRNA recruitment can occur at any time during PIC assembly.

The protein localises to the cytoplasm. Its function is as follows. One of the essential components for the initiation of protein synthesis. Stabilizes the binding of IF-2 and IF-3 on the 30S subunit to which N-formylmethionyl-tRNA(fMet) subsequently binds. Helps modulate mRNA selection, yielding the 30S pre-initiation complex (PIC). Upon addition of the 50S ribosomal subunit IF-1, IF-2 and IF-3 are released leaving the mature 70S translation initiation complex. This Burkholderia cenocepacia (strain HI2424) protein is Translation initiation factor IF-1 2.